The following is a 188-amino-acid chain: Peptide deformylase (188 aa).

The Fe cation site is built by cysteine 109 and histidine 152. The active site involves glutamate 153. Histidine 156 lines the Fe cation pocket.

Belongs to the polypeptide deformylase family. Requires Fe(2+) as cofactor.

It carries out the reaction N-terminal N-formyl-L-methionyl-[peptide] + H2O = N-terminal L-methionyl-[peptide] + formate. Its function is as follows. Removes the formyl group from the N-terminal Met of newly synthesized proteins. Requires at least a dipeptide for an efficient rate of reaction. N-terminal L-methionine is a prerequisite for activity but the enzyme has broad specificity at other positions. The chain is Peptide deformylase from Chloroflexus aurantiacus (strain ATCC 29366 / DSM 635 / J-10-fl).